A 266-amino-acid chain; its full sequence is NAD kinase 2 (266 aa).

The Proton acceptor role is filled by aspartate 51. Residues 51 to 52 (DG), 123 to 124 (NE), arginine 150, aspartate 152, 163 to 168 (TGYSKS), and alanine 187 contribute to the NAD(+) site.

It belongs to the NAD kinase family. Requires a divalent metal cation as cofactor.

The protein resides in the cytoplasm. It catalyses the reaction NAD(+) + ATP = ADP + NADP(+) + H(+). Its function is as follows. Involved in the regulation of the intracellular balance of NAD and NADP, and is a key enzyme in the biosynthesis of NADP. Catalyzes specifically the phosphorylation on 2'-hydroxyl of the adenosine moiety of NAD to yield NADP. The polypeptide is NAD kinase 2 (Oceanobacillus iheyensis (strain DSM 14371 / CIP 107618 / JCM 11309 / KCTC 3954 / HTE831)).